The sequence spans 619 residues: Chaperone protein HscA homolog (619 aa).

It belongs to the heat shock protein 70 family.

Chaperone involved in the maturation of iron-sulfur cluster-containing proteins. Has a low intrinsic ATPase activity which is markedly stimulated by HscB. The polypeptide is Chaperone protein HscA homolog (Shewanella denitrificans (strain OS217 / ATCC BAA-1090 / DSM 15013)).